Reading from the N-terminus, the 357-residue chain is mRNA endoribonuclease toxin LS (357 aa).

As to quaternary structure, forms homodimer in solution. Forms a complex with cognate antitoxin RnlB and with enterobacteria phage T4 antitoxin Dmd.

It is found in the cytoplasm. Toxic component of a type II toxin-antitoxin (TA) system. A stable (half-life 27.6 minutes) endoribonuclease that in the absence of cognate antitoxin RnlB causes generalized RNA degradation. Degrades late enterobacteria phage T4 mRNAs, protecting the host against T4 reproduction. Activity is inhibited by cognate antitoxin RnlB and by enterobacteria phage T4 protein Dmd. Targets cyaA mRNA. This chain is mRNA endoribonuclease toxin LS (rnlA), found in Escherichia coli (strain K12).